A 312-amino-acid chain; its full sequence is tRNA dimethylallyltransferase (312 aa).

Residue 13 to 20 (GPTAAGKT) participates in ATP binding. 15 to 20 (TAAGKT) contributes to the substrate binding site. Interaction with substrate tRNA regions lie at residues 38–41 (DSAM), 162–166 (QRLLR), and 244–249 (RCVGYR).

It belongs to the IPP transferase family. Monomer. Mg(2+) is required as a cofactor.

The catalysed reaction is adenosine(37) in tRNA + dimethylallyl diphosphate = N(6)-dimethylallyladenosine(37) in tRNA + diphosphate. Functionally, catalyzes the transfer of a dimethylallyl group onto the adenine at position 37 in tRNAs that read codons beginning with uridine, leading to the formation of N6-(dimethylallyl)adenosine (i(6)A). This Chromohalobacter salexigens (strain ATCC BAA-138 / DSM 3043 / CIP 106854 / NCIMB 13768 / 1H11) protein is tRNA dimethylallyltransferase.